The primary structure comprises 222 residues: Protein GrpE (222 aa).

Residues 1–21 (MSDEKNKFTDASFENCDLKNP) form a disordered region.

It belongs to the GrpE family. Homodimer.

Its subcellular location is the cytoplasm. Functionally, participates actively in the response to hyperosmotic and heat shock by preventing the aggregation of stress-denatured proteins, in association with DnaK and GrpE. It is the nucleotide exchange factor for DnaK and may function as a thermosensor. Unfolded proteins bind initially to DnaJ; upon interaction with the DnaJ-bound protein, DnaK hydrolyzes its bound ATP, resulting in the formation of a stable complex. GrpE releases ADP from DnaK; ATP binding to DnaK triggers the release of the substrate protein, thus completing the reaction cycle. Several rounds of ATP-dependent interactions between DnaJ, DnaK and GrpE are required for fully efficient folding. This is Protein GrpE from Bartonella tribocorum (strain CIP 105476 / IBS 506).